A 448-amino-acid polypeptide reads, in one-letter code: MSKKLISIVDVKDYVGQEVTIGAWVTNKSGKGKIAFVQLRDGSAFFQGVAFKPNFIEKYGEESGLEKFDVIKRLNQETSVYVTGIVKEDERSKFGYELDITDLEIIGESHEYPITPKEHGTDFLMDNRHLWLRSRKQMAVMQIRNAIIYATYEFFDQNGFIKFDSPILSENAAEDSTELFETDYFGKPAFLSQSGQLYLEAGAMALGRVFDFGPVFRAEKSKTRRHLTEFWMMDAEYSFLSHEESLDLQEAYVKALIQGVLDRAPQALDILERDVEALKRYITEPFKRVSYDDAITLLQEHEADEDTDYEHLEHGDDFGSPHETWISNYFGVPTFVVNYPASFKAFYMKPVPGNPERVLCADLLAPEGYGEIIGGSMREDNYDALVAKMDELGMDKSEYDFYLDLRKYGSVPHGGFGIGIERMVTFVAGTKHIREAIPFPRMLHRIRP.

The protein belongs to the class-II aminoacyl-tRNA synthetase family. As to quaternary structure, homodimer.

The protein localises to the cytoplasm. The catalysed reaction is tRNA(Asn) + L-asparagine + ATP = L-asparaginyl-tRNA(Asn) + AMP + diphosphate + H(+). The chain is Asparagine--tRNA ligase from Streptococcus pyogenes serotype M12 (strain MGAS9429).